We begin with the raw amino-acid sequence, 138 residues long: Small ribosomal subunit protein uS11c (138 aa).

The tract at residues 1–23 (MAKAIPRVGSRKNGRISSRKSAR) is disordered. Over residues 9-23 (GSRKNGRISSRKSAR) the composition is skewed to basic residues.

Belongs to the universal ribosomal protein uS11 family. Part of the 30S ribosomal subunit.

The protein resides in the plastid. The protein localises to the chloroplast. In Coffea arabica (Arabian coffee), this protein is Small ribosomal subunit protein uS11c.